Here is a 195-residue protein sequence, read N- to C-terminus: Thioredoxin reductase-like selenoprotein T (195 aa).

The N-terminal stretch at Met-1–Ala-19 is a signal peptide. A cross-link (cysteinyl-selenocysteine (Cys-Sec)) is located at residues Cys-46–Sec-49. A non-standard amino acid (selenocysteine) is located at residue Sec-49. The chain crosses the membrane as a helical span at residues Ile-85–Gly-103.

The protein belongs to the SelWTH family. Selenoprotein T subfamily. In terms of processing, may contain a selenide-sulfide bond between Cys-46 and Sec-49. This bond is speculated to serve as redox-active pair. Ubiquitous. Highly expressed in the endocrine pancreas.

The protein resides in the endoplasmic reticulum membrane. It catalyses the reaction [thioredoxin]-dithiol + NADP(+) = [thioredoxin]-disulfide + NADPH + H(+). Selenoprotein with thioredoxin reductase-like oxidoreductase activity. Protects dopaminergic neurons against oxidative stress and cell death. Involved in ADCYAP1/PACAP-induced calcium mobilization and neuroendocrine secretion. Plays a role in fibroblast anchorage and redox regulation. In gastric smooth muscle, modulates the contraction processes through the regulation of calcium release and MYLK activation. In pancreatic islets, involved in the control of glucose homeostasis, contributes to prolonged ADCYAP1/PACAP-induced insulin secretion. In Homo sapiens (Human), this protein is Thioredoxin reductase-like selenoprotein T.